A 298-amino-acid polypeptide reads, in one-letter code: Cyclin-C (298 aa).

One can recognise a Cyclin N-terminal domain in the interval 46 to 162; it reads NFITAVATEC…ILDCCLVVHH (117 aa). The disordered stretch occupies residues 278-298; sequence KLPKPNTPIPPPQQQQSSYHM.

The protein belongs to the cyclin family. Cyclin C subfamily. In terms of assembly, component of the Mediator complex.

The protein resides in the nucleus. Functionally, component of the Mediator complex, a coactivator involved in regulated gene transcription of nearly all RNA polymerase II-dependent genes. Mediator functions as a bridge to convey information from gene-specific regulatory proteins to the basal RNA polymerase II transcription machinery. Mediator is recruited to promoters by direct interactions with regulatory proteins and serves as a scaffold for the assembly of a functional preinitiation complex with RNA polymerase II and the general transcription factors. Binds to and activates cyclin-dependent kinase cdk-8 that phosphorylates the CTD (C-terminal domain) of the large subunit of RNA polymerase II (RNAp II), which may inhibit the formation of a transcription initiation complex. This is Cyclin-C (cic-1) from Caenorhabditis briggsae.